Reading from the N-terminus, the 245-residue chain is Zinc finger protein 575 (245 aa).

Positions 1-67 are disordered; the sequence is MLERGAESAA…PPQRPHRCPD (67 aa). Residues 36 to 49 are compositionally biased toward low complexity; sequence PSQSAPGPTASAGS. A compositionally biased stretch (basic residues) spans 52–63; it reads RPRRRPPPQRPH. 6 consecutive C2H2-type zinc fingers follow at residues 63 to 85, 91 to 113, 119 to 141, 147 to 169, 177 to 199, and 213 to 240; these read HRCP…RLAH, HPCP…RLTH, HPCP…LWTH, YPCP…RHTH, YPCP…RLCH, and HRCS…QVEH.

It belongs to the krueppel C2H2-type zinc-finger protein family.

Its subcellular location is the nucleus. May be involved in transcriptional regulation. In Homo sapiens (Human), this protein is Zinc finger protein 575 (ZNF575).